Here is a 221-residue protein sequence, read N- to C-terminus: Tetraspanin-2 (221 aa).

Residues 1 to 13 (MGRFRGGLRCIKY) are Cytoplasmic-facing. Residues 14–34 (LLLGFNLLFWLAGSAVIAFGL) form a helical membrane-spanning segment. At 35–54 (WFRFGGTMKDLSSEDKSPEY) the chain is on the extracellular side. A helical transmembrane segment spans residues 55 to 75 (FYVGLYVLVGAGALMMTVGFF). Residues 76-90 (GCCGAMRESQCVLGS) are Cytoplasmic-facing. Residues 91–111 (FFTCLLVIFAAEVTTGVFAFI) form a helical membrane-spanning segment. The Extracellular portion of the chain corresponds to 112–188 (GKDVAIRHVQ…ETVISAKLQL (77 aa)). Asn139 carries N-linked (GlcNAc...) asparagine glycosylation. The helical transmembrane segment at 189-209 (IGIVGIGIAGLTIFGMIFSMV) threads the bilayer. Topologically, residues 210 to 221 (LCCAIRNSRDVI) are cytoplasmic.

The protein belongs to the tetraspanin (TM4SF) family.

The protein localises to the membrane. Functionally, may play a role in signalling in oligodendrocytes in the early stages of their terminal differentiation into myelin-forming glia and may also function in stabilizing the mature sheath. The chain is Tetraspanin-2 (Tspan2) from Mus musculus (Mouse).